The following is a 460-amino-acid chain: Ammonium transporter Rh type B-B (460 aa).

At 1–10 (MTSYSTNMRI) the chain is on the cytoplasmic side. Residues 11-31 (KLPLFCLLLQFITIILFAVFV) traverse the membrane as a helical segment. Residues 32–62 (RYDHESDARGWHEELNNHSSSNADNDFYYRY) are Extracellular-facing. N-linked (GlcNAc...) asparagine glycosylation is present at N48. A helical transmembrane segment spans residues 63-83 (PSFQDVHVMIFIGFGFLMTFL). The Cytoplasmic portion of the chain corresponds to 84–87 (KRYG). A helical membrane pass occupies residues 88–108 (FSSVAFNFLIAAFGLQWSTLI). At 109-125 (QGFFHGFHDGKIHVGIE) the chain is on the extracellular side. The helical transmembrane segment at 126-146 (SMINADFCTGAVLISFGAVLG) threads the bilayer. Residues 147 to 150 (KTSP) are Cytoplasmic-facing. A helical transmembrane segment spans residues 151-171 (VQLIIMTLVEVTLFGINEYII). The Extracellular portion of the chain corresponds to 172–179 (LNIVGAKD). A helical transmembrane segment spans residues 180 to 202 (AGGSMTIHTFGAYFGLIVSRVLY). Over 203–220 (REDLEKSRQREGSVYHSD) the chain is Cytoplasmic. A helical membrane pass occupies residues 221–241 (LFAMIGTIYLWMFWPSFNSAV). Over 242 to 252 (TAHGDDQHRTV) the chain is Extracellular. The helical transmembrane segment at 253-273 (MNTYYSLAACTLATFGFSALL) threads the bilayer. Topologically, residues 274–283 (NGEGKLDMVH) are cytoplasmic. Residues 284–304 (IQNAALAGGVAVGTSGEMMLT) traverse the membrane as a helical segment. Residue P305 is a topological domain, extracellular. Residues 306 to 326 (FGAMIAGTLAGMISVLGYKYL) traverse the membrane as a helical segment. The Cytoplasmic portion of the chain corresponds to 327-347 (TPVLDSKLKIQDTCGVHNLHG). A helical transmembrane segment spans residues 348 to 368 (MPGILGAIIGAIVALFATADI). Residues 369-394 (YGDGMGDVFPLISDGSRTAKQQSLYQ) lie on the Extracellular side of the membrane. A helical membrane pass occupies residues 395–415 (FLALLVALGFAIIGGTVVGFI). At 416 to 460 (LKLPIFGTPSDAECFEDAIYWEVPGGEGHQQLTVVINNEDPDTQA) the chain is on the cytoplasmic side.

Belongs to the ammonium transporter (TC 2.A.49) family. Rh subfamily.

Its subcellular location is the basolateral cell membrane. It localises to the cytoplasmic vesicle membrane. Functions as a specific ammonium transporter. This is Ammonium transporter Rh type B-B (rhbg-b) from Xenopus laevis (African clawed frog).